A 60-amino-acid chain; its full sequence is Large ribosomal subunit protein bL32 (60 aa).

The protein belongs to the bacterial ribosomal protein bL32 family.

This Borrelia turicatae (strain 91E135) protein is Large ribosomal subunit protein bL32.